Here is a 228-residue protein sequence, read N- to C-terminus: Lipoprotein-releasing system ATP-binding protein LolD (228 aa).

The 223-residue stretch at I6–S228 folds into the ABC transporter domain. Residue G42–T49 coordinates ATP.

It belongs to the ABC transporter superfamily. Lipoprotein translocase (TC 3.A.1.125) family.

It localises to the cell inner membrane. Its function is as follows. Usually LolD forms an ABC transporter complex with LolC and LolE involved in the translocation of lipoprotein, in an ATP-dependent manner. However, LolE is certainly not functional as it is frameshifted. The polypeptide is Lipoprotein-releasing system ATP-binding protein LolD (Buchnera aphidicola subsp. Acyrthosiphon pisum (strain APS) (Acyrthosiphon pisum symbiotic bacterium)).